Reading from the N-terminus, the 327-residue chain is GMP reductase (327 aa).

The active-site Thioimidate intermediate is the Cys176. Residue 205-228 (IIADGGIRTHGDIAKSIRFGATMV) coordinates NADP(+).

The protein belongs to the IMPDH/GMPR family. GuaC type 2 subfamily.

The catalysed reaction is IMP + NH4(+) + NADP(+) = GMP + NADPH + 2 H(+). Functionally, catalyzes the irreversible NADPH-dependent deamination of GMP to IMP. It functions in the conversion of nucleobase, nucleoside and nucleotide derivatives of G to A nucleotides, and in maintaining the intracellular balance of A and G nucleotides. The sequence is that of GMP reductase from Streptococcus equi subsp. equi (strain 4047).